Consider the following 455-residue polypeptide: Nucleoprotein (455 aa).

The tract at residues 1 to 62 is disordered; the sequence is MSFVPGQENA…ATTQPNSGSV (62 aa). Residues 9–23 show a composition bias toward low complexity; the sequence is NAGSRSSSGNRAGNG. Composition is skewed to polar residues over residues 30 to 42 and 49 to 61; these read WADQTERGLNNQN and PKQTATTQPNSGS. The tract at residues 56 to 197 is RNA-binding; it reads QPNSGSVVPH…GFYVEGSGRS (142 aa). In terms of domain architecture, CoV N NTD spans 64–193; sequence PHYSWFSGIT…VLPQGFYVEG (130 aa). Residues Arg109, Arg125, and Arg167 each contribute to the RNA site. Disordered stretches follow at residues 159–230, 271–290, and 382–429; these read RTSA…STVK, PRQKRTPNKQCPVQQCFGKR, and QDGG…RELT. Residue Ser170 is modified to Phosphoserine; by host. A Phosphothreonine; by host modification is found at Thr177. Positions 193 to 212 are enriched in low complexity; that stretch reads GSGRSAPASRSGSRPQSRGP. A Phosphoserine; by host modification is found at Ser194. The segment covering 215-227 has biased composition (polar residues); the sequence is RARSSSNQRQPAS. The CoV N CTD domain occupies 260–383; that stretch reads AKEVRQKILN…ENLNAYQNQD (124 aa). A dimerization region spans residues 267 to 384; sequence ILNKPRQKRT…NLNAYQNQDG (118 aa). Phosphoserine; by host is present on Ser390. The segment covering 393 to 402 has biased composition (basic residues); that stretch reads PQRKRGTKQK. Ser425 is subject to Phosphoserine; by host. At Thr429 the chain carries Phosphothreonine; by host.

The protein belongs to the betacoronavirus nucleocapsid protein family. In terms of assembly, homooligomer. Both monomeric and oligomeric forms interact with RNA. Interacts with protein M. Interacts with NSP3; this interaction serves to tether the genome to the newly translated replicase-transcriptase complex at a very early stage of infection. Interacts (when phosphorylated) with host DDX1; this interaction is essential to produce a full set of subgenomic and genomic RNAs. ADP-ribosylated. The ADP-ribosylation is retained in the virion during infection. Post-translationally, phosphorylated on serine and threonine residues. Phosphorylated by host GSK3A and GSK3B. Phosphorylation allows recruitment of host RNA helicase DDX1 which facilitates template readthrough and enables longer subgenomic mRNA synthesis.

Its subcellular location is the virion. The protein localises to the host endoplasmic reticulum-Golgi intermediate compartment. It is found in the host Golgi apparatus. Packages the positive strand viral genome RNA into a helical ribonucleocapsid (RNP) and plays a fundamental role during virion assembly through its interactions with the viral genome and membrane protein M. Plays an important role in enhancing the efficiency of subgenomic viral RNA transcription as well as viral replication. The chain is Nucleoprotein from Murine coronavirus (strain JHM) (MHV-JHM).